A 117-amino-acid chain; its full sequence is CUE domain-containing protein CUE4 (117 aa).

The segment at 27–74 (QVPSRTVQDAKPAPSVATNDPSPEPVPSAPEERVARLNRHGSDRKRAV) is disordered. Residue lysine 37 forms a Glycyl lysine isopeptide (Lys-Gly) (interchain with G-Cter in ubiquitin) linkage. Serine 48 carries the phosphoserine modification. Residues 56–74 (PEERVARLNRHGSDRKRAV) are compositionally biased toward basic and acidic residues. Residues 74–116 (VNSDMVEIVMTMAPHVPQEKVVQDLRNTGSIEHTMENIFAGKL) enclose the CUE domain.

Post-translationally, ubiquitinated.

It localises to the cytoplasm. It is found in the endoplasmic reticulum. This is CUE domain-containing protein CUE4 (CUE4) from Saccharomyces cerevisiae (strain ATCC 204508 / S288c) (Baker's yeast).